A 146-amino-acid polypeptide reads, in one-letter code: Acidic phospholipase A2 C (146 aa).

The N-terminal stretch at 1–21 (MNPAHLLILAAVCVSPLGASS) is a signal peptide. Residues 22 to 27 (NRPMPL) constitute a propeptide that is removed on maturation. 7 disulfides stabilise this stretch: C38/C98, C53/C145, C55/C71, C70/C126, C77/C119, C87/C112, and C105/C117. Ca(2+)-binding residues include Y54, G56, and G58. H74 is an active-site residue. Ca(2+) is bound at residue D75. Residue D120 is part of the active site.

Belongs to the phospholipase A2 family. Group I subfamily. D49 sub-subfamily. The cofactor is Ca(2+). As to expression, expressed by the venom gland.

The protein localises to the secreted. The catalysed reaction is a 1,2-diacyl-sn-glycero-3-phosphocholine + H2O = a 1-acyl-sn-glycero-3-phosphocholine + a fatty acid + H(+). Functionally, PLA2 catalyzes the calcium-dependent hydrolysis of the 2-acyl groups in 3-sn-phosphoglycerides. The sequence is that of Acidic phospholipase A2 C from Naja sputatrix (Malayan spitting cobra).